The sequence spans 329 residues: Glycerol-3-phosphate dehydrogenase [NAD(P)+] (329 aa).

NADPH-binding residues include serine 13, tryptophan 14, histidine 34, and lysine 105. Residues lysine 105, glycine 134, and serine 136 each coordinate sn-glycerol 3-phosphate. Residue alanine 138 coordinates NADPH. Residues lysine 189, aspartate 242, serine 252, arginine 253, and asparagine 254 each coordinate sn-glycerol 3-phosphate. Lysine 189 serves as the catalytic Proton acceptor. Arginine 253 serves as a coordination point for NADPH. Positions 277 and 279 each coordinate NADPH.

This sequence belongs to the NAD-dependent glycerol-3-phosphate dehydrogenase family.

The protein localises to the cytoplasm. It carries out the reaction sn-glycerol 3-phosphate + NAD(+) = dihydroxyacetone phosphate + NADH + H(+). It catalyses the reaction sn-glycerol 3-phosphate + NADP(+) = dihydroxyacetone phosphate + NADPH + H(+). Its pathway is membrane lipid metabolism; glycerophospholipid metabolism. Functionally, catalyzes the reduction of the glycolytic intermediate dihydroxyacetone phosphate (DHAP) to sn-glycerol 3-phosphate (G3P), the key precursor for phospholipid synthesis. The polypeptide is Glycerol-3-phosphate dehydrogenase [NAD(P)+] (Legionella pneumophila (strain Paris)).